Here is a 704-residue protein sequence, read N- to C-terminus: Elongation factor G (704 aa).

Positions 10–290 constitute a tr-type G domain; the sequence is NKVRNIGIMA…AVVDFLPNPL (281 aa). Residues 19 to 26, 83 to 87, and 137 to 140 contribute to the GTP site; these read AHIDAGKT, DTPGH, and NKMD.

It belongs to the TRAFAC class translation factor GTPase superfamily. Classic translation factor GTPase family. EF-G/EF-2 subfamily.

Its subcellular location is the cytoplasm. Functionally, catalyzes the GTP-dependent ribosomal translocation step during translation elongation. During this step, the ribosome changes from the pre-translocational (PRE) to the post-translocational (POST) state as the newly formed A-site-bound peptidyl-tRNA and P-site-bound deacylated tRNA move to the P and E sites, respectively. Catalyzes the coordinated movement of the two tRNA molecules, the mRNA and conformational changes in the ribosome. The sequence is that of Elongation factor G from Paenarthrobacter aurescens (strain TC1).